The primary structure comprises 83 residues: Small ribosomal subunit protein uS17 (83 aa).

It belongs to the universal ribosomal protein uS17 family. As to quaternary structure, part of the 30S ribosomal subunit.

In terms of biological role, one of the primary rRNA binding proteins, it binds specifically to the 5'-end of 16S ribosomal RNA. The polypeptide is Small ribosomal subunit protein uS17 (Aliarcobacter butzleri (strain RM4018) (Arcobacter butzleri)).